Here is a 314-residue protein sequence, read N- to C-terminus: BURP domain-containing protein 8 (314 aa).

Positions 1–16 are cleaved as a signal peptide; that stretch reads MDLVRLTSLLPPSVMG. Residues 98 to 314 form the BURP domain; the sequence is FFLEKDLFPG…PLGDMLWVRN (217 aa).

Expressed in shoot and panicles.

This Oryza sativa subsp. japonica (Rice) protein is BURP domain-containing protein 8 (BURP8).